Reading from the N-terminus, the 358-residue chain is Methylthioribose-1-phosphate isomerase (358 aa).

Substrate is bound by residues 54 to 56 (RGA), Arg-96, and Gln-205. Asp-246 functions as the Proton donor in the catalytic mechanism. A substrate-binding site is contributed by 256–257 (SK).

Belongs to the eIF-2B alpha/beta/delta subunits family. MtnA subfamily.

The catalysed reaction is 5-(methylsulfanyl)-alpha-D-ribose 1-phosphate = 5-(methylsulfanyl)-D-ribulose 1-phosphate. The protein operates within amino-acid biosynthesis; L-methionine biosynthesis via salvage pathway; L-methionine from S-methyl-5-thio-alpha-D-ribose 1-phosphate: step 1/6. Its function is as follows. Catalyzes the interconversion of methylthioribose-1-phosphate (MTR-1-P) into methylthioribulose-1-phosphate (MTRu-1-P). This chain is Methylthioribose-1-phosphate isomerase, found in Pseudomonas putida (strain GB-1).